The sequence spans 459 residues: tRNA modification GTPase MnmE (459 aa).

(6S)-5-formyl-5,6,7,8-tetrahydrofolate contacts are provided by arginine 22, glutamate 85, and arginine 124. In terms of domain architecture, TrmE-type G spans 221-380 (GLSTVIVGKP…LEIQIRDLFF (160 aa)). Residue asparagine 231 coordinates K(+). GTP is bound by residues 231-236 (NVGKSS), 250-256 (TEVAGTT), and 275-278 (DTAG). Serine 235 serves as a coordination point for Mg(2+). Residues threonine 250, valine 252, and threonine 255 each coordinate K(+). Threonine 256 is a binding site for Mg(2+). Lysine 459 is a (6S)-5-formyl-5,6,7,8-tetrahydrofolate binding site.

The protein belongs to the TRAFAC class TrmE-Era-EngA-EngB-Septin-like GTPase superfamily. TrmE GTPase family. In terms of assembly, homodimer. Heterotetramer of two MnmE and two MnmG subunits. The cofactor is K(+).

The protein localises to the cytoplasm. Its function is as follows. Exhibits a very high intrinsic GTPase hydrolysis rate. Involved in the addition of a carboxymethylaminomethyl (cmnm) group at the wobble position (U34) of certain tRNAs, forming tRNA-cmnm(5)s(2)U34. The protein is tRNA modification GTPase MnmE of Staphylococcus aureus (strain MSSA476).